The chain runs to 396 residues: Tryptophan synthase beta chain (396 aa).

N6-(pyridoxal phosphate)lysine is present on Lys-86.

The protein belongs to the TrpB family. As to quaternary structure, tetramer of two alpha and two beta chains. Requires pyridoxal 5'-phosphate as cofactor.

The enzyme catalyses (1S,2R)-1-C-(indol-3-yl)glycerol 3-phosphate + L-serine = D-glyceraldehyde 3-phosphate + L-tryptophan + H2O. Its pathway is amino-acid biosynthesis; L-tryptophan biosynthesis; L-tryptophan from chorismate: step 5/5. Functionally, the beta subunit is responsible for the synthesis of L-tryptophan from indole and L-serine. This is Tryptophan synthase beta chain from Photobacterium profundum (strain SS9).